A 207-amino-acid polypeptide reads, in one-letter code: MFITLEGPEGAGKSTNRDYLAARLREQGLDVVLTREPGGTPLAEKVRELLLAPSDEVMAADTELLLVFAARAQHLAQVIRPALARGAVVLCDRFTDATYAYQGGGRGLSVERIAALEQFVQGELRPDLTLVFDLPVEVGLARAAARGRLDRFEQEGQAFFEAVRQAYLQRARREPQRYDLLDAAQPLEAVQRAIDALLPGILERCRG.

Residue 7 to 14 (GPEGAGKS) coordinates ATP.

This sequence belongs to the thymidylate kinase family.

The catalysed reaction is dTMP + ATP = dTDP + ADP. In terms of biological role, phosphorylation of dTMP to form dTDP in both de novo and salvage pathways of dTTP synthesis. This Pseudomonas putida (strain W619) protein is Thymidylate kinase.